The following is a 278-amino-acid chain: Orotidine 5'-phosphate decarboxylase (278 aa).

Residues aspartate 40, 62–64 (KTH), 93–102 (DRKFADIGNT), tyrosine 223, and arginine 242 each bind substrate. Residue lysine 95 is the Proton donor of the active site.

The protein belongs to the OMP decarboxylase family.

It carries out the reaction orotidine 5'-phosphate + H(+) = UMP + CO2. It functions in the pathway pyrimidine metabolism; UMP biosynthesis via de novo pathway; UMP from orotate: step 2/2. The chain is Orotidine 5'-phosphate decarboxylase (URA1) from Schizophyllum commune (Split gill fungus).